Here is a 587-residue protein sequence, read N- to C-terminus: Aspartate--tRNA ligase (587 aa).

Glutamate 175 is a binding site for L-aspartate. Residues 199-202 (QQFK) form an aspartate region. L-aspartate contacts are provided by arginine 221 and histidine 446. 221–223 (RDE) is a binding site for ATP. Residue glutamate 480 participates in ATP binding. Arginine 487 lines the L-aspartate pocket. 532 to 535 (GVDR) is an ATP binding site.

This sequence belongs to the class-II aminoacyl-tRNA synthetase family. Type 1 subfamily. In terms of assembly, homodimer.

It is found in the cytoplasm. It catalyses the reaction tRNA(Asp) + L-aspartate + ATP = L-aspartyl-tRNA(Asp) + AMP + diphosphate. Functionally, catalyzes the attachment of L-aspartate to tRNA(Asp) in a two-step reaction: L-aspartate is first activated by ATP to form Asp-AMP and then transferred to the acceptor end of tRNA(Asp). The polypeptide is Aspartate--tRNA ligase (Streptomyces coelicolor (strain ATCC BAA-471 / A3(2) / M145)).